The primary structure comprises 426 residues: Serine--tRNA ligase (426 aa).

230-232 (TAE) lines the L-serine pocket. Residue 261–263 (RSE) participates in ATP binding. An L-serine-binding site is contributed by Glu284. 348 to 351 (EISS) is an ATP binding site. Ser384 contributes to the L-serine binding site.

Belongs to the class-II aminoacyl-tRNA synthetase family. Type-1 seryl-tRNA synthetase subfamily. Homodimer. The tRNA molecule binds across the dimer.

The protein localises to the cytoplasm. It catalyses the reaction tRNA(Ser) + L-serine + ATP = L-seryl-tRNA(Ser) + AMP + diphosphate + H(+). The catalysed reaction is tRNA(Sec) + L-serine + ATP = L-seryl-tRNA(Sec) + AMP + diphosphate + H(+). It participates in aminoacyl-tRNA biosynthesis; selenocysteinyl-tRNA(Sec) biosynthesis; L-seryl-tRNA(Sec) from L-serine and tRNA(Sec): step 1/1. Functionally, catalyzes the attachment of serine to tRNA(Ser). Is also able to aminoacylate tRNA(Sec) with serine, to form the misacylated tRNA L-seryl-tRNA(Sec), which will be further converted into selenocysteinyl-tRNA(Sec). This Streptococcus mutans serotype c (strain ATCC 700610 / UA159) protein is Serine--tRNA ligase.